The sequence spans 450 residues: 23S rRNA (uracil(1939)-C(5))-methyltransferase RlmD (450 aa).

The [4Fe-4S] cluster site is built by Cys-81, Cys-87, Cys-90, and Cys-173. The S-adenosyl-L-methionine site is built by Gln-276, Phe-305, Asn-310, Glu-326, Asp-353, and Asp-372. Residue Cys-402 is the Nucleophile of the active site.

It belongs to the class I-like SAM-binding methyltransferase superfamily. RNA M5U methyltransferase family. RlmD subfamily.

It carries out the reaction uridine(1939) in 23S rRNA + S-adenosyl-L-methionine = 5-methyluridine(1939) in 23S rRNA + S-adenosyl-L-homocysteine + H(+). Catalyzes the formation of 5-methyl-uridine at position 1939 (m5U1939) in 23S rRNA. The chain is 23S rRNA (uracil(1939)-C(5))-methyltransferase RlmD from Idiomarina loihiensis (strain ATCC BAA-735 / DSM 15497 / L2-TR).